The primary structure comprises 236 residues: Sugar fermentation stimulation protein homolog (236 aa).

Belongs to the SfsA family.

In Synechococcus elongatus (strain ATCC 33912 / PCC 7942 / FACHB-805) (Anacystis nidulans R2), this protein is Sugar fermentation stimulation protein homolog.